The primary structure comprises 101 residues: Ferredoxin Fdx2 (101 aa).

2 consecutive 4Fe-4S ferredoxin-type domains span residues 1–29 and 31–64; these read MATY…EGDE and YVID…PNPQ. The [4Fe-4S] cluster site is built by C9, C12, C15, C19, C38, C41, C50, and C54.

The cofactor is [4Fe-4S] cluster.

In terms of biological role, ferredoxins are iron-sulfur proteins that transfer electrons in a wide variety of metabolic reactions. Fdx2 can receive electrons from both FdR_A and FdR_B ferredoxin reductases, with a preference for FdR_B compared with FdR_A, and transfer the electrons to the cytochrome P450 CYP260A1. This chain is Ferredoxin Fdx2, found in Sorangium cellulosum (strain So ce56) (Polyangium cellulosum (strain So ce56)).